Here is a 413-residue protein sequence, read N- to C-terminus: Inactive squalene synthase 2 (413 aa).

N-acetylglycine is present on G2. Transmembrane regions (helical) follow at residues 283–303 (AIFQ…ALCY) and 390–410 (AIFV…LKAN).

Belongs to the phytoene/squalene synthase family. Mg(2+) serves as cofactor. Mn(2+) is required as a cofactor. As to expression, mostly expressed in hypocotyls, leaves and cotyledons, and, to a lower extent, in stems.

Its subcellular location is the endoplasmic reticulum membrane. In Arabidopsis thaliana (Mouse-ear cress), this protein is Inactive squalene synthase 2.